Here is a 333-residue protein sequence, read N- to C-terminus: Gap junction alpha-4 protein (333 aa).

Topologically, residues 1 to 20 are cytoplasmic; sequence MGDWGFLEKLLDQVQEHSTV. The chain crosses the membrane as a helical span at residues 21-40; the sequence is VGKIWLTVLFIFRILILGLA. Topologically, residues 41–76 are extracellular; sequence GESVWGDEQSDFECNTAQPGCTNVCYDQAFPISHIR. A helical membrane pass occupies residues 77-99; the sequence is YWVLQFLFVSTPTLVYLGHVIYL. The Cytoplasmic portion of the chain corresponds to 100 to 148; sequence SRREERLRQKEGELRALPAKDPQVERALAAVERQMAKISVAEDGRLRIR. Residues 149–165 traverse the membrane as a helical segment; the sequence is GALMGTYVASVLCKSVL. The Extracellular segment spans residues 166–207; that stretch reads EAGFLYGQWRLYGWTMEPVFVCQRAPCPYLVDCFVSRPTEKT. Residues 208 to 230 traverse the membrane as a helical segment; sequence IFIIFMLVVGLISLVLNLLELVH. The Cytoplasmic portion of the chain corresponds to 231 to 333; it reads LLCRCLSRGM…SSSASKKQYV (103 aa). A disordered region spans residues 292-333; that stretch reads ANLTTEERLASSRPPLFLDPPPQNGQKPPSRPSSSASKKQYV. A compositionally biased stretch (low complexity) spans 323–333; sequence PSSSASKKQYV.

The protein belongs to the connexin family. Alpha-type (group II) subfamily. A connexon is composed of a hexamer of connexins. In terms of tissue distribution, expressed in multiple organs and tissues, including heart, uterus, ovary, and blood vessel endothelium.

Its subcellular location is the cell membrane. The protein localises to the cell junction. It is found in the gap junction. In terms of biological role, one gap junction consists of a cluster of closely packed pairs of transmembrane channels, the connexons, through which materials of low MW diffuse from one cell to a neighboring cell. The polypeptide is Gap junction alpha-4 protein (GJA4) (Homo sapiens (Human)).